The chain runs to 131 residues: uncharacterized protein (131 aa).

A run of 2 helical transmembrane segments spans residues 61-81 and 102-122; these read LLLL…YLPI and VCSI…ALRY.

The protein localises to the membrane. This is an uncharacterized protein from Saccharomyces cerevisiae (strain ATCC 204508 / S288c) (Baker's yeast).